Here is a 393-residue protein sequence, read N- to C-terminus: MMTKEAPLIALVAGEISGDILGAGLINALKLHYPNARFIGVAGPRMIQAGCETLFDMEELAVMGLAEVVKHLPRLLKRRKQVIETMLAEKPDIFIGIDAPDFNLTVEEKLKASGIKTIHYVSPSVWAWRQNRVHKIARATNLVLAFLPFEKAFYDRFNVPCRFIGHTMADTIALKPNRAEACVGLNLDEAQRYLAILVGSRASEVGFLAEPFLKAAQILKQQYPDLQFLVPLVNDKRIAQFEQIKAQVAPELSVHILKGNARQAMIAAEASLLASGTAALEGMLCKSPMVVGYKMKAMTYWLAKRLVKTKYISLPNLLADEMLVPELIQDECNPENLAWYLGNYLADDADHRKQRNELKQRFTELHKLIQCDADAQAAQAVVDVLEANTSDQN.

Belongs to the LpxB family.

The enzyme catalyses a lipid X + a UDP-2-N,3-O-bis[(3R)-3-hydroxyacyl]-alpha-D-glucosamine = a lipid A disaccharide + UDP + H(+). It participates in bacterial outer membrane biogenesis; LPS lipid A biosynthesis. In terms of biological role, condensation of UDP-2,3-diacylglucosamine and 2,3-diacylglucosamine-1-phosphate to form lipid A disaccharide, a precursor of lipid A, a phosphorylated glycolipid that anchors the lipopolysaccharide to the outer membrane of the cell. This chain is Lipid-A-disaccharide synthase, found in Actinobacillus pleuropneumoniae serotype 5b (strain L20).